A 296-amino-acid chain; its full sequence is Bifunctional protein FolD (296 aa).

NADP(+) contacts are provided by residues 168–170 (GRS), Ser197, and Thr238.

This sequence belongs to the tetrahydrofolate dehydrogenase/cyclohydrolase family. In terms of assembly, homodimer.

It catalyses the reaction (6R)-5,10-methylene-5,6,7,8-tetrahydrofolate + NADP(+) = (6R)-5,10-methenyltetrahydrofolate + NADPH. The catalysed reaction is (6R)-5,10-methenyltetrahydrofolate + H2O = (6R)-10-formyltetrahydrofolate + H(+). It functions in the pathway one-carbon metabolism; tetrahydrofolate interconversion. In terms of biological role, catalyzes the oxidation of 5,10-methylenetetrahydrofolate to 5,10-methenyltetrahydrofolate and then the hydrolysis of 5,10-methenyltetrahydrofolate to 10-formyltetrahydrofolate. In Porphyromonas gingivalis (strain ATCC BAA-308 / W83), this protein is Bifunctional protein FolD.